Here is a 106-residue protein sequence, read N- to C-terminus: Urease subunit beta (106 aa).

Belongs to the urease beta subunit family. In terms of assembly, heterotrimer of UreA (gamma), UreB (beta) and UreC (alpha) subunits. Three heterotrimers associate to form the active enzyme. The apoenzyme interacts with an accessory complex composed of UreD, UreF and UreG, which is required for the assembly of the nickel containing metallocenter of UreC. The UreE protein may also play a direct role as a metallochaperone in nickel transfer to the urease apoprotein.

It is found in the cytoplasm. It carries out the reaction urea + 2 H2O + H(+) = hydrogencarbonate + 2 NH4(+). Its pathway is nitrogen metabolism; urea degradation; CO(2) and NH(3) from urea (urease route): step 1/1. The apoenzyme can be activated in vitro in the presence of nickel ions and carbon dioxide, which promotes carboxylation of 'Lys-217' of the UreC (alpha) subunit. This chain is Urease subunit beta, found in Klebsiella aerogenes (Enterobacter aerogenes).